The following is a 494-amino-acid chain: Protein DETOXIFICATION 22 (494 aa).

The next 12 membrane-spanning stretches (helical) occupy residues leucine 40–valine 60, isoleucine 78–leucine 98, isoleucine 123–leucine 143, isoleucine 159–phenylalanine 179, isoleucine 188–valine 208, glycine 217–valine 237, glycine 268–leucine 288, alanine 299–valine 319, isoleucine 340–leucine 360, leucine 384–glycine 404, leucine 416–leucine 436, and valine 441–leucine 461.

Belongs to the multi antimicrobial extrusion (MATE) (TC 2.A.66.1) family.

The protein resides in the membrane. The sequence is that of Protein DETOXIFICATION 22 from Arabidopsis thaliana (Mouse-ear cress).